Here is a 379-residue protein sequence, read N- to C-terminus: 3-dehydroquinate synthase (379 aa).

This sequence belongs to the archaeal-type DHQ synthase family.

The enzyme catalyses 2-amino-2,3,7-trideoxy-D-lyxo-hept-6-ulosonate + NAD(+) + H2O = 3-dehydroquinate + NH4(+) + NADH + H(+). In terms of biological role, catalyzes the oxidative deamination and cyclization of 2-amino-3,7-dideoxy-D-threo-hept-6-ulosonic acid (ADH) to yield 3-dehydroquinate (DHQ), which is fed into the canonical shikimic pathway of aromatic amino acid biosynthesis. The polypeptide is 3-dehydroquinate synthase (Methanococcoides burtonii (strain DSM 6242 / NBRC 107633 / OCM 468 / ACE-M)).